The sequence spans 597 residues: Elongation factor 4 (597 aa).

The tr-type G domain maps to 2–184 (QHIRNFSIIA…AVISRIPPPK (183 aa)). Residues 14–19 (DHGKST) and 131–134 (NKID) contribute to the GTP site.

The protein belongs to the TRAFAC class translation factor GTPase superfamily. Classic translation factor GTPase family. LepA subfamily.

The protein localises to the cell inner membrane. It carries out the reaction GTP + H2O = GDP + phosphate + H(+). In terms of biological role, required for accurate and efficient protein synthesis under certain stress conditions. May act as a fidelity factor of the translation reaction, by catalyzing a one-codon backward translocation of tRNAs on improperly translocated ribosomes. Back-translocation proceeds from a post-translocation (POST) complex to a pre-translocation (PRE) complex, thus giving elongation factor G a second chance to translocate the tRNAs correctly. Binds to ribosomes in a GTP-dependent manner. This chain is Elongation factor 4, found in Nitrosospira multiformis (strain ATCC 25196 / NCIMB 11849 / C 71).